A 714-amino-acid polypeptide reads, in one-letter code: Sodium-dependent acetylcholine transporter (714 aa).

Residues 1–21 (MSVSSNDPEQRNGRGMASGNN) form a disordered region. The Cytoplasmic portion of the chain corresponds to 1 to 74 (MSVSSNDPEQ…GNWSNKSDYL (74 aa)). A run of 3 helical transmembrane segments spans residues 75–95 (LAVI…FLVF), 100–120 (AAFL…MFFM), and 152–172 (ISGF…FYLI). Residues 173-257 (NSFSFSIPWS…LSKGVDDFGT (85 aa)) lie on the Extracellular side of the membrane. N-linked (GlcNAc...) asparagine glycans are attached at residues asparagine 192, asparagine 205, asparagine 211, and asparagine 222. 9 consecutive transmembrane segments (helical) span residues 258-278 (LNWY…LCLF), 287-307 (VVYV…TRLL), 336-356 (AAVQ…TIAS), 368-388 (IWLV…LTFS), 422-442 (AGVS…LLVV), 476-496 (VCAL…LFWM), 502-522 (FVLT…INWV), 548-568 (ILFK…LWLD), and 584-604 (ILTA…VGIW). At 605–714 (QFCIAKGTIT…IPKFERETAI (110 aa)) the chain is on the cytoplasmic side.

Belongs to the sodium:neurotransmitter symporter (SNF) (TC 2.A.22) family. In terms of assembly, interacts with stn-1; part of the DGC. As to expression, body wall, and vulval and enteric muscles.

It localises to the cell membrane. The protein localises to the postsynaptic cell membrane. In terms of biological role, mediates sodium-dependent uptake of acetylcholine at neuromuscular junctions during periods of increased synaptic activity, may also prevent spillover to adjacent synaptic sites. Not involved in the uptake of other neurotransmitters (GABA, glycine, proline and glutamate) and there was also no inhibition of uptake by adding an excess of other candidate substrates (GABA, glycine, taurine, creatine, proline, alanine, carnitine, glutamate and betaine). Required for muscle integrity; altered transport of acetylcholine due to loss of dystrophin-glycoprotein complex (DGC) function results in muscle degeneration. The chain is Sodium-dependent acetylcholine transporter from Caenorhabditis elegans.